We begin with the raw amino-acid sequence, 334 residues long: Serine/threonine-protein kinase (334 aa).

The Protein kinase domain occupies 53 to 333; sequence FEVLQPLQSG…DEILNFGMWT (281 aa). ATP-binding positions include 59 to 67 and K82; that span reads LQSGSEGRV. Catalysis depends on D167, which acts as the Proton acceptor.

This sequence belongs to the protein kinase superfamily. Ser/Thr protein kinase family.

It catalyses the reaction L-seryl-[protein] + ATP = O-phospho-L-seryl-[protein] + ADP + H(+). The catalysed reaction is L-threonyl-[protein] + ATP = O-phospho-L-threonyl-[protein] + ADP + H(+). Functionally, able to phosphorylate in vitro the major virion phosphoprotein phosphorylated in vivo. This Sus scrofa (Pig) protein is Serine/threonine-protein kinase (PK).